A 218-amino-acid chain; its full sequence is Ribose-5-phosphate isomerase A (218 aa).

Residues K7, 28 to 31 (TGST), 81 to 84 (DGAD), and 94 to 97 (KGGG) each bind substrate. The active-site Proton acceptor is the E103. K121 serves as a coordination point for substrate.

This sequence belongs to the ribose 5-phosphate isomerase family. Homodimer.

The enzyme catalyses aldehydo-D-ribose 5-phosphate = D-ribulose 5-phosphate. Its pathway is carbohydrate degradation; pentose phosphate pathway; D-ribose 5-phosphate from D-ribulose 5-phosphate (non-oxidative stage): step 1/1. Functionally, catalyzes the reversible conversion of ribose-5-phosphate to ribulose 5-phosphate. This is Ribose-5-phosphate isomerase A from Vibrio vulnificus (strain YJ016).